The chain runs to 690 residues: MPDVDPTPDLDLEAIDSEPAAAEAAEQLRAALRHHNYRYYVLDAPVVSDAEYDRLFQQLQTLEAEYPVLQTPDSPTHQVGGPVRDELGTVTHPAPMLSLKAVYEEDEVRNFAETCREELGRETVTYIAEPKFDGLAVELIYEDGRLVQGATRGDGETGEEITANVKTIKGVPLRLRDDARPVPDRLVVRGEAYMRKDEFNAFNRRREEEGKKVFANPRNAAAGSLRQLDSNITARRPLRIYFYEIAPVDGRDFATHAEVLEALPEWGLRVCEDHIRRCDGIDAALAHHAALVDRRDDLPYEIDGLVIKVNDFDGHETLGVRDRDPRWAAAYKFPPRRATTSIEDLFVQVGRTGRITPVAVLAPVEVGGVEVTRASLHNQNEIDRKDIRIGDTVLIERAGDVIPQVVKVIEDERDGTEAPYHIPDACPVCGSEVVLSDDKKQAFCTGGMTCPAQFRERLKHYASREATDIEGLGDKRAEQLIDAGLIQTISDLYELEKADLLQLERYADKSAQNLIDEIEASLEQDLDRFLYALGIPLVGSATARLLAQHFDTLDALVDADEDALTTIDDIGPEVAHSIATFFADDANRGVIDEMRDAGLTLTNPYAEDAARLEGLTFVFTGSLEGWTRSAVQRFVEQHGANATSSVSGNTDYVVAGPGAGSKRDDADDRGIPVLDEDAFHALLREQGIDA.

Residues 49-53 (DAEYD), 98-99 (SL), and E129 contribute to the NAD(+) site. The active-site N6-AMP-lysine intermediate is the K131. Positions 152, 191, 308, and 332 each coordinate NAD(+). Residues C426, C429, C444, and C450 each contribute to the Zn(2+) site. The region spanning 607–690 (EDAARLEGLT…ALLREQGIDA (84 aa)) is the BRCT domain.

This sequence belongs to the NAD-dependent DNA ligase family. LigA subfamily. Mg(2+) is required as a cofactor. Mn(2+) serves as cofactor.

It catalyses the reaction NAD(+) + (deoxyribonucleotide)n-3'-hydroxyl + 5'-phospho-(deoxyribonucleotide)m = (deoxyribonucleotide)n+m + AMP + beta-nicotinamide D-nucleotide.. Its function is as follows. DNA ligase that catalyzes the formation of phosphodiester linkages between 5'-phosphoryl and 3'-hydroxyl groups in double-stranded DNA using NAD as a coenzyme and as the energy source for the reaction. It is essential for DNA replication and repair of damaged DNA. This chain is DNA ligase, found in Salinibacter ruber (strain DSM 13855 / M31).